Here is a 114-residue protein sequence, read N- to C-terminus: Putative membrane protein insertion efficiency factor (114 aa).

It belongs to the UPF0161 family.

The protein localises to the cell inner membrane. In terms of biological role, could be involved in insertion of integral membrane proteins into the membrane. This chain is Putative membrane protein insertion efficiency factor, found in Nitrobacter hamburgensis (strain DSM 10229 / NCIMB 13809 / X14).